Reading from the N-terminus, the 128-residue chain is Regulator of ribonuclease activity B (128 aa).

This sequence belongs to the RraB family. As to quaternary structure, interacts with the C-terminal region of Rne.

It is found in the cytoplasm. Functionally, globally modulates RNA abundance by binding to RNase E (Rne) and regulating its endonucleolytic activity. Can modulate Rne action in a substrate-dependent manner by altering the composition of the degradosome. In Idiomarina loihiensis (strain ATCC BAA-735 / DSM 15497 / L2-TR), this protein is Regulator of ribonuclease activity B.